The primary structure comprises 369 residues: Deoxyhypusine synthase (369 aa).

NAD(+) contacts are provided by residues 105 to 109 (SNLIS), 131 to 133 (TAG), glutamate 137, and aspartate 238. Spermidine is bound at residue 136 to 137 (EE). Spermidine is bound at residue aspartate 243. Residue glycine 283 participates in NAD(+) binding. Residue histidine 288 participates in spermidine binding. 308–309 (TA) is an NAD(+) binding site. Residues 314–316 (GSD) and 323–329 (EAVSWGK) each bind spermidine. Lysine 329 acts as the Nucleophile in catalysis. Position 342–343 (342–343 (DA)) interacts with NAD(+).

It belongs to the deoxyhypusine synthase family. Requires NAD(+) as cofactor.

The enzyme catalyses [eIF5A protein]-L-lysine + spermidine = [eIF5A protein]-deoxyhypusine + propane-1,3-diamine. Its pathway is protein modification; eIF5A hypusination. Functionally, catalyzes the NAD-dependent oxidative cleavage of spermidine and the subsequent transfer of the butylamine moiety of spermidine to the epsilon-amino group of a critical lysine residue of the eIF-5A precursor protein to form the intermediate deoxyhypusine residue. This is the first step of the post-translational modification of that lysine into an unusual amino acid residue named hypusine. Hypusination is unique to mature eIF-5A factor and is essential for its function. In Mus musculus (Mouse), this protein is Deoxyhypusine synthase (Dhps).